Reading from the N-terminus, the 299-residue chain is Sulfate adenylyltransferase subunit 2 (299 aa).

This sequence belongs to the PAPS reductase family. CysD subfamily. In terms of assembly, sulfate-activating enzymes, NodP and NodQ, may be physically associated.

It carries out the reaction sulfate + ATP + H(+) = adenosine 5'-phosphosulfate + diphosphate. Functionally, proposed to provide activated sulfate for transfer to nod factor. The chain is Sulfate adenylyltransferase subunit 2 (nodP) from Rhizobium sp. (strain BR816).